The sequence spans 368 residues: DNA replication and repair protein RecF (368 aa).

Residue 30 to 37 (GNNAQGKT) coordinates ATP.

Belongs to the RecF family.

The protein localises to the cytoplasm. Its function is as follows. The RecF protein is involved in DNA metabolism; it is required for DNA replication and normal SOS inducibility. RecF binds preferentially to single-stranded, linear DNA. It also seems to bind ATP. This Streptococcus pyogenes serotype M12 (strain MGAS9429) protein is DNA replication and repair protein RecF.